A 443-amino-acid chain; its full sequence is MTHIQLDYGKALEFFGQHEIDQQQDIVKTIHKTIHEGTGAGSDFLGWVNLPEDYDKKEFSRIVEASKRIKSNSDVLVVIGIGGSYLGARAAIEMLTSSFRNSNEYPEIVFVGNHLSSTYTKELVDYLSDKDFSVNVISKSGTTTEPAVAFRLFKQLVEDKYGKAEAKKRIFATTDKAKGALKQLADNEGYETFVVPDDVGGRYSVLTAVGLLPIATAGINIESIMIGANKARKELSSDKLDENIAYQYATIRNILYSKGYTTEMLINYEPSMQYFNEWWKQLYGESEGKDFKGIYPSSANYTTDLHSLGQYVQEGRRFLFETVVKVNNPKHDITIEEDSDDLDGLNYLAGKTIDEVNTKAFEGTLLAHTDGGVPNVVVNIPRLDEETFGYVVYFFELACAMSGYQLGVNPFNQPGVEAYKQNMFALLGKPGFEDKKKELEERL.

Glu285 functions as the Proton donor in the catalytic mechanism. Catalysis depends on residues His306 and Lys420.

It belongs to the GPI family.

It is found in the cytoplasm. The enzyme catalyses alpha-D-glucose 6-phosphate = beta-D-fructose 6-phosphate. The protein operates within carbohydrate biosynthesis; gluconeogenesis. It functions in the pathway carbohydrate degradation; glycolysis; D-glyceraldehyde 3-phosphate and glycerone phosphate from D-glucose: step 2/4. In terms of biological role, catalyzes the reversible isomerization of glucose-6-phosphate to fructose-6-phosphate. The sequence is that of Glucose-6-phosphate isomerase from Staphylococcus haemolyticus (strain JCSC1435).